The sequence spans 341 residues: Probable alcohol acetyltransferase (341 aa).

The N-terminal 40 residues, 1-40 (MFASRILRNSAQTLKTELPHKETIKMAYDLHKPRSTAIRH), are a transit peptide targeting the mitochondrion. The AB hydrolase-1 domain occupies 48-301 (PILFLHGIFG…NSNHDILDQR (254 aa)). Catalysis depends on charge relay system residues S121, D145, and H295.

It belongs to the AB hydrolase superfamily.

It is found in the mitochondrion. Probable alcohol acetyltransferase that uses acetyl-CoA to synthesize acetate esters from various alcohols. Not involved in the synthesis of ethyl acetate. This chain is Probable alcohol acetyltransferase (EAT2), found in Wickerhamomyces anomalus (strain ATCC 58044 / CBS 1984 / NCYC 433 / NRRL Y-366-8) (Yeast).